The primary structure comprises 271 residues: Imidazole glycerol phosphate synthase subunit HisF (271 aa).

Active-site residues include aspartate 12 and aspartate 136.

Belongs to the HisA/HisF family. As to quaternary structure, heterodimer of HisH and HisF.

The protein localises to the cytoplasm. The enzyme catalyses 5-[(5-phospho-1-deoxy-D-ribulos-1-ylimino)methylamino]-1-(5-phospho-beta-D-ribosyl)imidazole-4-carboxamide + L-glutamine = D-erythro-1-(imidazol-4-yl)glycerol 3-phosphate + 5-amino-1-(5-phospho-beta-D-ribosyl)imidazole-4-carboxamide + L-glutamate + H(+). Its pathway is amino-acid biosynthesis; L-histidine biosynthesis; L-histidine from 5-phospho-alpha-D-ribose 1-diphosphate: step 5/9. Functionally, IGPS catalyzes the conversion of PRFAR and glutamine to IGP, AICAR and glutamate. The HisF subunit catalyzes the cyclization activity that produces IGP and AICAR from PRFAR using the ammonia provided by the HisH subunit. This Natronomonas pharaonis (strain ATCC 35678 / DSM 2160 / CIP 103997 / JCM 8858 / NBRC 14720 / NCIMB 2260 / Gabara) (Halobacterium pharaonis) protein is Imidazole glycerol phosphate synthase subunit HisF.